The sequence spans 732 residues: uncharacterized protein (732 aa).

Disordered stretches follow at residues 38–90 (TTLA…NNNK) and 226–629 (EESP…MDYQ). Positions 47–56 (QQQQQQQQQQ) are enriched in low complexity. The span at 57–76 (PPSSSTTKEGGATTTQDNKL) shows a compositional bias: polar residues. Low complexity-rich tracts occupy residues 77-89 (TANGGTTADNNNN), 231-247 (TTTTAAATTTTTTTTAA), and 254-318 (TTTT…GTNS). The segment covering 327–338 (KAKKGVPKKAPT) has biased composition (basic residues). Low complexity-rich tracts occupy residues 339–383 (KKQP…APKT), 401–421 (KTSKSQATTTTTTTTVQSTTK), and 487–523 (SASTAKPTPTTTTTTTTTTKPKSTIAKTSTSTTIKSK). The segment covering 553–566 (AAAEEQEEEEEEDN) has biased composition (acidic residues). Low complexity-rich tracts occupy residues 567–577 (SNGIQNNNSSN) and 593–609 (DNFSNFGSSNGNGNGLL). Acidic residues predominate over residues 610 to 621 (SEDDDDDDDDDN).

This is an uncharacterized protein from Dictyostelium discoideum (Social amoeba).